Reading from the N-terminus, the 264-residue chain is Thymidylate synthase (264 aa).

Arg21 is a binding site for dUMP. His51 provides a ligand contact to (6R)-5,10-methylene-5,6,7,8-tetrahydrofolate. Position 126–127 (126–127 (RR)) interacts with dUMP. The active-site Nucleophile is Cys146. DUMP is bound by residues 166 to 169 (RSCD), Asn177, and 207 to 209 (HLY). A (6R)-5,10-methylene-5,6,7,8-tetrahydrofolate-binding site is contributed by Asp169. Ala263 serves as a coordination point for (6R)-5,10-methylene-5,6,7,8-tetrahydrofolate.

Belongs to the thymidylate synthase family. Bacterial-type ThyA subfamily. As to quaternary structure, homodimer.

The protein localises to the cytoplasm. It catalyses the reaction dUMP + (6R)-5,10-methylene-5,6,7,8-tetrahydrofolate = 7,8-dihydrofolate + dTMP. It participates in pyrimidine metabolism; dTTP biosynthesis. In terms of biological role, catalyzes the reductive methylation of 2'-deoxyuridine-5'-monophosphate (dUMP) to 2'-deoxythymidine-5'-monophosphate (dTMP) while utilizing 5,10-methylenetetrahydrofolate (mTHF) as the methyl donor and reductant in the reaction, yielding dihydrofolate (DHF) as a by-product. This enzymatic reaction provides an intracellular de novo source of dTMP, an essential precursor for DNA biosynthesis. In Cronobacter sakazakii (strain ATCC BAA-894) (Enterobacter sakazakii), this protein is Thymidylate synthase.